The sequence spans 241 residues: Superantigen-like protein 13 (241 aa).

The signal sequence occupies residues 1–26 (MNNNITKKIILSTTLLLLGTASTQFP).

The protein belongs to the staphylococcal/streptococcal toxin family. As to quaternary structure, interacts with host FPR2; this interaction promotes neutrophil chemotaxis.

Acts as a pathogen alarming molecule by acting on host neutrophil chemotactic factors FPR2. Plays a role of chemoattractant and induces degranulation and oxidative burst in neutrophils. The sequence is that of Superantigen-like protein 13 from Staphylococcus aureus (strain Newman).